Here is a 1100-residue protein sequence, read N- to C-terminus: Serine/threonine/tyrosine-interacting-like protein 2 (1100 aa).

Positions Met-1–Gln-12 are enriched in polar residues. A disordered region spans residues Met-1–Val-21. The Tyrosine-protein phosphatase domain maps to Ser-141–Glu-289. Residues Cys-356–Gly-374 show a composition bias toward polar residues. Disordered stretches follow at residues Cys-356–Asp-383, Glu-411–Asp-436, Ala-479–Gln-504, Lys-542–Leu-561, Lys-575–Arg-615, Val-667–Pro-686, Cys-888–Ile-1060, and Val-1075–Lys-1100. Positions Asp-418 to Asp-428 are enriched in basic and acidic residues. The segment covering His-580–Arg-615 has biased composition (basic and acidic residues). The segment covering Val-667–Leu-676 has biased composition (low complexity). Basic and acidic residues predominate over residues Cys-888–Gly-898. Composition is skewed to polar residues over residues Ala-907–Ile-916, Ser-994–Ala-1013, and Phe-1029–Tyr-1041. A compositionally biased stretch (basic and acidic residues) spans Arg-1089–Lys-1100.

It belongs to the protein-tyrosine phosphatase family. Non-receptor class dual specificity subfamily. In terms of tissue distribution, expressed in muscle fibers in a regular striated pattern (at protein level).

It localises to the cytoplasm. The protein localises to the myofibril. The protein resides in the sarcomere. Required for myofiber maturation. This is Serine/threonine/tyrosine-interacting-like protein 2 (styxl2) from Danio rerio (Zebrafish).